The sequence spans 609 residues: (R)-linalool synthase TPS5, chloroplastic (609 aa).

Residues 1–42 constitute a chloroplast transit peptide; the sequence is MVSILSNIGMMVVTFKRPSLFTSLRRRSANNIIITKHSHPIS. (2E)-geranyl diphosphate is bound by residues Arg-325, Asp-362, Asp-366, Arg-503, and Asp-506. Mg(2+) contacts are provided by Asp-362 and Asp-366. The DDXXD motif motif lies at 362–366; it reads DDIYD. Mg(2+) is bound by residues Asp-506, Thr-510, and Glu-514.

The protein belongs to the terpene synthase family. Tpsb subfamily. The cofactor is Mg(2+). It depends on Mn(2+) as a cofactor. In terms of tissue distribution, highly expressed in young fruits and plant tops. Expressed in flower buds and trichomes of petioles and stems. Expressed at low levels in young leaves, stems, petioles, sepals and petals.

Its subcellular location is the plastid. The protein resides in the chloroplast. The catalysed reaction is (2E)-geranyl diphosphate + H2O = (R)-linalool + diphosphate. It catalyses the reaction (2E,6E)-farnesyl diphosphate + H2O = (6E)-nerolidol + diphosphate. It participates in secondary metabolite biosynthesis; terpenoid biosynthesis. Functionally, involved in monoterpene (C10) biosynthesis in glandular trichomes. Converts geranyl diphosphate to linalool in glandular trichomes in response to jasmonate (JA). Can convert farnesyl diphosphate to nerolidol in vitro. The polypeptide is (R)-linalool synthase TPS5, chloroplastic (Solanum lycopersicum (Tomato)).